We begin with the raw amino-acid sequence, 944 residues long: Protein phosphatase 1 regulatory subunit 37 homolog (944 aa).

The segment at 42-71 (QQQSHSAATSVRKKTCQDANSSGEDPNGRI) is disordered. LRR repeat units follow at residues 203-224 (SCVR…TTIF), 232-255 (SLQM…CKMA), 262-282 (SLTC…LVLI), 290-311 (GLRE…HIYQ), and 318-338 (SLQL…RHIC). A disordered region spans residues 517–598 (EEGDSGVEKK…KERHQRFVRS (82 aa)). The segment covering 522-542 (GVEKKDGNECEGEDNKDRQDT) has biased composition (basic and acidic residues). Composition is skewed to polar residues over residues 543 to 554 (PAETENGVSSNE) and 567 to 585 (PESN…STSK). The span at 586 to 595 (LSRKERHQRF) shows a compositional bias: basic residues.

The protein belongs to the PPP1R37 family.

The polypeptide is Protein phosphatase 1 regulatory subunit 37 homolog (Caenorhabditis elegans).